The primary structure comprises 661 residues: 7-beta-hydroxy-3-oxochol-24-oyl-CoA 4-desaturase (661 aa).

Position 104 (glutamine 104) interacts with FMN. Histidine 168–histidine 171 serves as a coordination point for substrate. Residue tyrosine 173 is the Proton donor of the active site. Residues arginine 222, lysine 298, and glycine 320–arginine 321 each bind FMN. [4Fe-4S] cluster contacts are provided by cysteine 344, cysteine 347, cysteine 351, and cysteine 363. FAD-binding residues include glycine 394, glutamate 413, glutamine 421, lysine 431, and alanine 458.

In the N-terminal section; belongs to the NADH:flavin oxidoreductase/NADH oxidase family. In terms of assembly, homotrimer. FMN serves as cofactor. The cofactor is FAD. Requires [4Fe-4S] cluster as cofactor.

It catalyses the reaction 7beta-hydroxy-3-oxochol-24-oyl-CoA + NAD(+) = 7beta-hydroxy-3-oxochol-4-en-24-oyl-CoA + NADH + H(+). It participates in lipid metabolism; bile acid degradation. With respect to regulation, activity is inhibited by sulfhydryl-reactive compounds, acriflavine, o-phenanthroline and EDTA. NADH-dependent flavin oxidoreductase. Stereo-specific NAD(H)-dependent 3-oxo-delta4-cholenoic acid oxidoreductase involved in bile acid 7beta-dehydroxylation. The polypeptide is 7-beta-hydroxy-3-oxochol-24-oyl-CoA 4-desaturase (Clostridium scindens (strain JCM 10418 / VPI 12708)).